A 628-amino-acid polypeptide reads, in one-letter code: ATP-dependent zinc metalloprotease FtsH 4 (628 aa).

Residues 1–14 lie on the Cytoplasmic side of the membrane; it reads MAIKPQPQWQRRLA. A helical transmembrane segment spans residues 15 to 35; the sequence is SVLLWGSTIYLLVNLLAPALF. Residues 36 to 119 are Lumenal-facing; that stretch reads RSQPPQVPYS…AAAPPAKNSW (84 aa). A helical membrane pass occupies residues 120-140; that stretch reads FGTLLSWVIPPLIFVGIWSFF. Over 141–628 the chain is Cytoplasmic; sequence LNRNNNGAPG…QVQAPGTLVV (488 aa). 214–221 contacts ATP; it reads GPPGTGKT. Zn(2+) is bound at residue His-438. The active site involves Glu-439. The Zn(2+) site is built by His-442 and Asp-515.

In the central section; belongs to the AAA ATPase family. It in the C-terminal section; belongs to the peptidase M41 family. In terms of assembly, homohexamer. Zn(2+) is required as a cofactor.

Its subcellular location is the cellular thylakoid membrane. Its function is as follows. Acts as a processive, ATP-dependent zinc metallopeptidase for both cytoplasmic and membrane proteins. Plays a role in the quality control of integral membrane proteins. The polypeptide is ATP-dependent zinc metalloprotease FtsH 4 (Synechocystis sp. (strain ATCC 27184 / PCC 6803 / Kazusa)).